A 336-amino-acid chain; its full sequence is dTDP-glucose 4,6-dehydratase (336 aa).

NAD(+) contacts are provided by residues 7–13 (GGAGFIG), 37–40 (DKLT), and 63–64 (DI). Position 87 (threonine 87) interacts with substrate. Threonine 102 contributes to the NAD(+) binding site. Residue 127-129 (TDE) participates in substrate binding. The Proton donor role is filled by aspartate 128. Residues glutamate 129 and tyrosine 151 each act as proton acceptor in the active site. 151 to 155 (YAAAK) is a binding site for NAD(+). Position 180 (asparagine 180) interacts with substrate. Position 181 (asparagine 181) interacts with NAD(+). Substrate-binding positions include 190 to 191 (KL), 206 to 208 (PVY), arginine 215, asparagine 250, and 274 to 277 (RPGH).

This sequence belongs to the NAD(P)-dependent epimerase/dehydratase family. dTDP-glucose dehydratase subfamily. As to quaternary structure, homodimer. NAD(+) is required as a cofactor.

It catalyses the reaction dTDP-alpha-D-glucose = dTDP-4-dehydro-6-deoxy-alpha-D-glucose + H2O. It participates in antibiotic biosynthesis; novobiocin biosynthesis. In terms of biological role, dTDP-glucose 4,6-dehydratase involved in the generation of the deoxysugar in the novobiocin biosynthesis pathway, an aminocoumarin family antibiotic that targets bacterial DNA gyrases. The chain is dTDP-glucose 4,6-dehydratase (novT) from Streptomyces niveus (Streptomyces spheroides).